The sequence spans 686 residues: Kinesin light chain (686 aa).

Disordered stretches follow at residues 1–23 and 158–204; these read MSGS…SQEQ and KYDE…SVSA. Residues 20-160 are a coiled coil; the sequence is SQEQIITGTR…EYMNSIKKYD (141 aa). 6 TPR repeats span residues 215–248, 257–290, 299–332, 341–374, 383–416, and 472–505; these read LRTL…LEKT, ATML…REKT, AATL…REKV, AKQL…YEKK, AKTK…AHER, and TTTL…RRNA. Disordered regions lie at residues 520 to 558 and 586 to 686; these read QDLS…YEKT and GYVE…SGNF. Residues 675–686 show a composition bias toward polar residues; that stretch reads DNLSSRRQSGNF.

Belongs to the kinesin light chain family. As to quaternary structure, oligomeric complex composed of two heavy chains and two light chains. Post-translationally, phosphorylation may modulate the process of mechanochemical coupling.

It localises to the cytoplasm. The protein resides in the cytoskeleton. Its function is as follows. Kinesin is a microtubule-associated force-producing protein that may play a role in organelle transport. The light chain may function in coupling of cargo to the heavy chain or in the modulation of its ATPase activity. This Strongylocentrotus purpuratus (Purple sea urchin) protein is Kinesin light chain.